The sequence spans 100 residues: Large ribosomal subunit protein uL23 (100 aa).

The protein belongs to the universal ribosomal protein uL23 family. Part of the 50S ribosomal subunit. Contacts protein L29, and trigger factor when it is bound to the ribosome.

Functionally, one of the early assembly proteins it binds 23S rRNA. One of the proteins that surrounds the polypeptide exit tunnel on the outside of the ribosome. Forms the main docking site for trigger factor binding to the ribosome. The polypeptide is Large ribosomal subunit protein uL23 (Lacticaseibacillus casei (strain BL23) (Lactobacillus casei)).